A 187-amino-acid chain; its full sequence is MKAFLVALLISIELALVFAGCPTIISKNRWGGQQARKVEPTTKPLKYVIINHTSGPSCVDEIDCSRMLVYIQNRHMNHLNYNDIGCNFIIGGDGQIYEGAGWQAAASHTPGWNKKSLLIGFIGDYEINRPSLKQLEAGKQLIECAVERGEIEQDYKLVGARTIRQTNSPGKYLFRELQSWKGFTRDP.

An N-terminal signal peptide occupies residues 1 to 19 (MKAFLVALLISIELALVFA). 2 cysteine pairs are disulfide-bonded: Cys-21–Cys-144 and Cys-58–Cys-64. The 128-residue stretch at 43-170 (KPLKYVIINH…RTIRQTNSPG (128 aa)) folds into the N-acetylmuramoyl-L-alanine amidase domain. N-linked (GlcNAc...) asparagine glycosylation is present at Asn-51.

The protein belongs to the N-acetylmuramoyl-L-alanine amidase 2 family.

The protein localises to the secreted. Peptidoglycan-recognition protein probably involved in innate immunity by binding to peptidoglycans (PGN) of bacteria and activating the prophenoloxidase (proPO) cascade immune response. Binds to 1,3-beta-D-glucan and PGN. This is Peptidoglycan-recognition protein 3 (PGRP-3) from Holotrichia diomphalia (Korean black chafer).